The chain runs to 206 residues: FMN-dependent NADH:quinone oxidoreductase (206 aa).

FMN is bound by residues S10 and 15–17; that span reads SVS.

The protein belongs to the azoreductase type 1 family. Homodimer. Requires FMN as cofactor.

It carries out the reaction 2 a quinone + NADH + H(+) = 2 a 1,4-benzosemiquinone + NAD(+). The enzyme catalyses N,N-dimethyl-1,4-phenylenediamine + anthranilate + 2 NAD(+) = 2-(4-dimethylaminophenyl)diazenylbenzoate + 2 NADH + 2 H(+). Its function is as follows. Quinone reductase that provides resistance to thiol-specific stress caused by electrophilic quinones. In terms of biological role, also exhibits azoreductase activity. Catalyzes the reductive cleavage of the azo bond in aromatic azo compounds to the corresponding amines. This is FMN-dependent NADH:quinone oxidoreductase from Acidobacterium capsulatum (strain ATCC 51196 / DSM 11244 / BCRC 80197 / JCM 7670 / NBRC 15755 / NCIMB 13165 / 161).